A 224-amino-acid polypeptide reads, in one-letter code: Elongation factor 1-beta 2 (224 aa).

Ala2 carries the post-translational modification N-acetylalanine. Positions 14–65 (VKSVEEHLAGKTYISGDQLSVDDVKVYAAVPVKPSDAFPNASKWYESVASQL) constitute a GST C-terminal domain. Residues 89–139 (EAEAPAAAADDDDDMDLFGDETEEEKKAAEEREAAKKDTKKPKESGKSSVL) form a disordered region. Acidic residues predominate over residues 97–111 (ADDDDDMDLFGDETE). Over residues 112-134 (EEKKAAEEREAAKKDTKKPKESG) the composition is skewed to basic and acidic residues.

This sequence belongs to the EF-1-beta/EF-1-delta family. In terms of assembly, EF-1 is composed of 4 subunits: alpha, beta (1B-alpha=beta'), delta (1B-beta), and gamma (1B-gamma).

Its function is as follows. EF-1-beta and EF-1-delta stimulate the exchange of GDP bound to EF-1-alpha to GTP. The polypeptide is Elongation factor 1-beta 2 (Arabidopsis thaliana (Mouse-ear cress)).